A 581-amino-acid polypeptide reads, in one-letter code: Arginine--tRNA ligase (581 aa).

Residues 126 to 136 carry the 'HIGH' region motif; that stretch reads PNLAKEMHVGH.

The protein belongs to the class-I aminoacyl-tRNA synthetase family. In terms of assembly, monomer.

The protein resides in the cytoplasm. It catalyses the reaction tRNA(Arg) + L-arginine + ATP = L-arginyl-tRNA(Arg) + AMP + diphosphate. The polypeptide is Arginine--tRNA ligase (Shewanella piezotolerans (strain WP3 / JCM 13877)).